Reading from the N-terminus, the 263-residue chain is Phosphate import ATP-binding protein PstB (263 aa).

The ABC transporter domain occupies 16–258 (VTARNVTVSY…PRDTRTQDYI (243 aa)). 48–55 (GPSGCGKS) provides a ligand contact to ATP.

The protein belongs to the ABC transporter superfamily. Phosphate importer (TC 3.A.1.7) family. In terms of assembly, the complex is composed of two ATP-binding proteins (PstB), two transmembrane proteins (PstC and PstA) and a solute-binding protein (PstS).

The protein resides in the cell inner membrane. It catalyses the reaction phosphate(out) + ATP + H2O = ADP + 2 phosphate(in) + H(+). Its function is as follows. Part of the ABC transporter complex PstSACB involved in phosphate import. Responsible for energy coupling to the transport system. This Maricaulis maris (strain MCS10) (Caulobacter maris) protein is Phosphate import ATP-binding protein PstB.